The primary structure comprises 300 residues: MTEQETYCGFIAIVGRPNVGKSTLLNKILGQKISITSRKAQTTRHRIVGIHTEGVYQAVYVDTPGLHIEEKRAINRLMNRAASSAIGDVDLIIFVVDGTHWNDDDEMVLNKLRRAKAPVVLAINKVDNIKNKDELLPFITDVSQKLEFKEIIPISAQRGNNIHNLEKIVRTSLRKGVHHFPEDYVTDRSQRFMASEIIREKLMRFTGEELPYSVTVEIEQFKLNDRGIYEINGLILVEREGQKKMVIGAKGQKLKTIGTEARQDMERLFDNKVHLELWVKVKSGWADDERALRSLGYIDE.

Positions 7–182 (YCGFIAIVGR…LRKGVHHFPE (176 aa)) constitute an Era-type G domain. The interval 15-22 (GRPNVGKS) is G1. 15–22 (GRPNVGKS) contacts GTP. The G2 stretch occupies residues 41–45 (QTTRH). The tract at residues 62 to 65 (DTPG) is G3. GTP contacts are provided by residues 62–66 (DTPGL) and 124–127 (NKVD). A G4 region spans residues 124 to 127 (NKVD). Residues 154–156 (ISA) are G5. In terms of domain architecture, KH type-2 spans 206 to 283 (TGEELPYSVT…HLELWVKVKS (78 aa)).

It belongs to the TRAFAC class TrmE-Era-EngA-EngB-Septin-like GTPase superfamily. Era GTPase family. As to quaternary structure, monomer.

The protein localises to the cytoplasm. Its subcellular location is the cell inner membrane. An essential GTPase that binds both GDP and GTP, with rapid nucleotide exchange. Plays a role in 16S rRNA processing and 30S ribosomal subunit biogenesis and possibly also in cell cycle regulation and energy metabolism. The chain is GTPase Era from Histophilus somni (strain 129Pt) (Haemophilus somnus).